Consider the following 206-residue polypeptide: MGERLGIFGGTFNPVHRGHLAMARAARDRCGLDQILWVPAAQPPHKPLAGGASIGDRVEMVRLAIAGEAGMALSLVDARRPGPSYAIDTLRLLEEQYPQAQWHWLLGQDGLADLPGWYRAAELIPRCRWIVVPRPGSGADPKQAMADLTERFGAVFVPLSDFECDISSTRVREQLAAGRAGWEALLPEQVVSYIHKRGLYDVPAGA.

This sequence belongs to the NadD family.

The catalysed reaction is nicotinate beta-D-ribonucleotide + ATP + H(+) = deamido-NAD(+) + diphosphate. It participates in cofactor biosynthesis; NAD(+) biosynthesis; deamido-NAD(+) from nicotinate D-ribonucleotide: step 1/1. Catalyzes the reversible adenylation of nicotinate mononucleotide (NaMN) to nicotinic acid adenine dinucleotide (NaAD). The sequence is that of Probable nicotinate-nucleotide adenylyltransferase from Gloeobacter violaceus (strain ATCC 29082 / PCC 7421).